Here is a 250-residue protein sequence, read N- to C-terminus: Ubiquinone/menaquinone biosynthesis C-methyltransferase UbiE (250 aa).

Residues S73, D94, and 122-123 (NA) contribute to the S-adenosyl-L-methionine site.

It belongs to the class I-like SAM-binding methyltransferase superfamily. MenG/UbiE family.

It carries out the reaction a 2-demethylmenaquinol + S-adenosyl-L-methionine = a menaquinol + S-adenosyl-L-homocysteine + H(+). It catalyses the reaction a 2-methoxy-6-(all-trans-polyprenyl)benzene-1,4-diol + S-adenosyl-L-methionine = a 5-methoxy-2-methyl-3-(all-trans-polyprenyl)benzene-1,4-diol + S-adenosyl-L-homocysteine + H(+). The protein operates within quinol/quinone metabolism; menaquinone biosynthesis; menaquinol from 1,4-dihydroxy-2-naphthoate: step 2/2. It functions in the pathway cofactor biosynthesis; ubiquinone biosynthesis. In terms of biological role, methyltransferase required for the conversion of demethylmenaquinol (DMKH2) to menaquinol (MKH2) and the conversion of 2-polyprenyl-6-methoxy-1,4-benzoquinol (DDMQH2) to 2-polyprenyl-3-methyl-6-methoxy-1,4-benzoquinol (DMQH2). The protein is Ubiquinone/menaquinone biosynthesis C-methyltransferase UbiE of Legionella pneumophila (strain Corby).